We begin with the raw amino-acid sequence, 144 residues long: Putative lipoprotein MAH_0816 (144 aa).

An N-terminal signal peptide occupies residues Met-1–Ala-24. Residue Cys-25 is the site of N-palmitoyl cysteine attachment. The S-diacylglycerol cysteine moiety is linked to residue Cys-25.

This sequence belongs to the mycobacterial 19 kDa antigen family.

It is found in the cell membrane. The sequence is that of Putative lipoprotein MAH_0816 from Mycobacterium avium subsp. hominissuis (strain TH135).